The primary structure comprises 313 residues: Dimethyladenosine transferase (313 aa).

S-adenosyl-L-methionine contacts are provided by His37, Leu39, Gly64, Glu85, Asp113, and Asn128.

It belongs to the class I-like SAM-binding methyltransferase superfamily. rRNA adenine N(6)-methyltransferase family. As to quaternary structure, part of the small subunit (SSU) processome, composed of more than 70 proteins and the RNA chaperone small nucleolar RNA (snoRNA) U3.

It is found in the nucleus. The protein localises to the nucleoplasm. Its subcellular location is the nucleolus. It carries out the reaction adenosine(1779)/adenosine(1780) in 18S rRNA + 4 S-adenosyl-L-methionine = N(6)-dimethyladenosine(1779)/N(6)-dimethyladenosine(1780) in 18S rRNA + 4 S-adenosyl-L-homocysteine + 4 H(+). Specifically dimethylates two adjacent adenosines in the loop of a conserved hairpin near the 3'-end of 18S rRNA in the 40S particle. Involved in the pre-rRNA processing steps leading to small-subunit rRNA production independently of its RNA-modifying catalytic activity. Part of the small subunit (SSU) processome, first precursor of the small eukaryotic ribosomal subunit. During the assembly of the SSU processome in the nucleolus, many ribosome biogenesis factors, an RNA chaperone and ribosomal proteins associate with the nascent pre-rRNA and work in concert to generate RNA folding, modifications, rearrangements and cleavage as well as targeted degradation of pre-ribosomal RNA by the RNA exosome. This is Dimethyladenosine transferase (Dimt1) from Mus musculus (Mouse).